Here is a 205-residue protein sequence, read N- to C-terminus: Glycerol-3-phosphate acyltransferase (205 aa).

Topologically, residues 1–3 are periplasmic; it reads MSA. The chain crosses the membrane as a helical span at residues 4–24; it reads IAPGMILFAYLCGSISSAILV. Over 25–52 the chain is Cytoplasmic; it reads CRLCGLPDPRTSGSGNPGATNVLRMGGK. A helical transmembrane segment spans residues 53-73; the sequence is GAALAVLIFDVLKGMLPVWGA. The Periplasmic portion of the chain corresponds to 74–80; that stretch reads YELGVSP. A helical transmembrane segment spans residues 81 to 101; it reads FWLGLIAIAACLGHIWPIFFG. Topologically, residues 102-111 are cytoplasmic; the sequence is FKGGKGVATA. Residues 112-132 form a helical membrane-spanning segment; it reads FGAIAPIGWDLTGVMAGTWLL. Topologically, residues 133–137 are periplasmic; it reads TVLLS. The helical transmembrane segment at 138–158 threads the bilayer; it reads GYSSLGAIVSALIAPFYVWWF. Topologically, residues 159-205 are cytoplasmic; that stretch reads KPQFTFPVSMLSCLILLRHHDNIQRLWRRQETKIWTKLKRKREKDPE.

This sequence belongs to the PlsY family. As to quaternary structure, probably interacts with PlsX.

It is found in the cell inner membrane. The catalysed reaction is sn-glycerol 3-phosphate + an acyl-CoA = a 1-acyl-sn-glycero-3-phosphate + CoA. The enzyme catalyses a fatty acyl-[ACP] + sn-glycerol 3-phosphate = a 1-acyl-sn-glycero-3-phosphate + holo-[ACP]. It functions in the pathway lipid metabolism; phospholipid metabolism. Catalyzes the transfer of an acyl group from acyl-ACP to glycerol-3-phosphate (G3P) to form lysophosphatidic acid (LPA). This enzyme can also utilize acyl-CoA as fatty acyl donor, but not acyl-PO(4). The polypeptide is Glycerol-3-phosphate acyltransferase (Escherichia fergusonii (strain ATCC 35469 / DSM 13698 / CCUG 18766 / IAM 14443 / JCM 21226 / LMG 7866 / NBRC 102419 / NCTC 12128 / CDC 0568-73)).